The sequence spans 427 residues: Enolase (427 aa).

Residue Q163 participates in (2R)-2-phosphoglycerate binding. The Proton donor role is filled by E205. Residues D242, E285, and D312 each contribute to the Mg(2+) site. (2R)-2-phosphoglycerate is bound by residues K337, R366, S367, and K388. The active-site Proton acceptor is the K337.

This sequence belongs to the enolase family. Mg(2+) is required as a cofactor.

Its subcellular location is the cytoplasm. The protein localises to the secreted. It localises to the cell surface. The catalysed reaction is (2R)-2-phosphoglycerate = phosphoenolpyruvate + H2O. It functions in the pathway carbohydrate degradation; glycolysis; pyruvate from D-glyceraldehyde 3-phosphate: step 4/5. Catalyzes the reversible conversion of 2-phosphoglycerate (2-PG) into phosphoenolpyruvate (PEP). It is essential for the degradation of carbohydrates via glycolysis. The protein is Enolase of Methylocella silvestris (strain DSM 15510 / CIP 108128 / LMG 27833 / NCIMB 13906 / BL2).